The following is a 264-amino-acid chain: MRQYHNLMKEVLAKGVQKSDRTGTGTISVFGHQMRFNLADGFPMVTTKKLHMKSIVYELLWFLKGSTDNNWLKERGVSIWNEWAAPDGDLGPIYGYQWRSWPAPNGQHIDQISEVVETIKKNPDSRRIIVSAWNVADIPRMALAPCHAFFQFYVADGKLSCQLYQRSADIFLGVPFNIASYALLTHMVAQQCNLEVGDFIWTGGDCHLYSNHLEQVDLQLSRDFLPLPKLNILRKPDSLFDYEFEDFEIVGYESHPHIKAPVAI.

R21 is a dUMP binding site. H51 provides a ligand contact to (6R)-5,10-methylene-5,6,7,8-tetrahydrofolate. 126 to 127 provides a ligand contact to dUMP; it reads RR. C146 acts as the Nucleophile in catalysis. DUMP is bound by residues 166–169, N177, and 207–209; these read RSAD and HLY. (6R)-5,10-methylene-5,6,7,8-tetrahydrofolate is bound at residue D169. A263 contributes to the (6R)-5,10-methylene-5,6,7,8-tetrahydrofolate binding site.

The protein belongs to the thymidylate synthase family. Bacterial-type ThyA subfamily. In terms of assembly, homodimer.

Its subcellular location is the cytoplasm. The enzyme catalyses dUMP + (6R)-5,10-methylene-5,6,7,8-tetrahydrofolate = 7,8-dihydrofolate + dTMP. Its pathway is pyrimidine metabolism; dTTP biosynthesis. In terms of biological role, catalyzes the reductive methylation of 2'-deoxyuridine-5'-monophosphate (dUMP) to 2'-deoxythymidine-5'-monophosphate (dTMP) while utilizing 5,10-methylenetetrahydrofolate (mTHF) as the methyl donor and reductant in the reaction, yielding dihydrofolate (DHF) as a by-product. This enzymatic reaction provides an intracellular de novo source of dTMP, an essential precursor for DNA biosynthesis. The chain is Thymidylate synthase from Polynucleobacter asymbioticus (strain DSM 18221 / CIP 109841 / QLW-P1DMWA-1) (Polynucleobacter necessarius subsp. asymbioticus).